We begin with the raw amino-acid sequence, 180 residues long: Translation initiation factor IF-3 (180 aa).

The protein belongs to the IF-3 family. As to quaternary structure, monomer.

The protein localises to the cytoplasm. IF-3 binds to the 30S ribosomal subunit and shifts the equilibrium between 70S ribosomes and their 50S and 30S subunits in favor of the free subunits, thus enhancing the availability of 30S subunits on which protein synthesis initiation begins. The polypeptide is Translation initiation factor IF-3 (Klebsiella pneumoniae).